Consider the following 318-residue polypeptide: Ribosomal protein L11 methyltransferase (318 aa).

Residues T161, G182, D204, and N247 each contribute to the S-adenosyl-L-methionine site.

This sequence belongs to the methyltransferase superfamily. PrmA family.

It is found in the cytoplasm. It carries out the reaction L-lysyl-[protein] + 3 S-adenosyl-L-methionine = N(6),N(6),N(6)-trimethyl-L-lysyl-[protein] + 3 S-adenosyl-L-homocysteine + 3 H(+). Functionally, methylates ribosomal protein L11. This chain is Ribosomal protein L11 methyltransferase, found in Moorella thermoacetica (strain ATCC 39073 / JCM 9320).